Here is a 241-residue protein sequence, read N- to C-terminus: RAD9, HUS1, RAD1-interacting nuclear orphan protein 1 (241 aa).

Residues 1 to 10 (MPPRKKRRQA) are compositionally biased toward basic residues. A disordered region spans residues 1-27 (MPPRKKRRQAAQKPQLLFHQQPLEAPK). The RAD1-binding motif motif lies at 56–62 (SWVSPQF). 2 disordered regions span residues 68-134 (SWFP…PLVP) and 157-204 (IPPD…LVTD). Over residues 72 to 87 (GKRKHHHRDHARRSSR) the composition is skewed to basic residues. Over residues 100–110 (ETPQSSASSAT) the composition is skewed to polar residues. Residues 129-136 (GRPLVPML) carry the D-box motif. The KEN box motif lies at 177–181 (LRENS). The span at 181-193 (SLPSCSLHTSTPK) shows a compositional bias: polar residues.

As to quaternary structure, interacts (when phosphorylated by PLK1) with POLQ; promoting POLQ recruitment to DNA damage sites. Interacts with RAD1; interaction is direct and promotes association with the 9-1-1 (RAD9-RAD1-HUS1) complex. Interacts with RAD18. Interacts with TOPBP1. Interacts with UBE2N. In terms of processing, phosphorylated by PLK1, promoting interaction with polymerase theta (POLQ). Post-translationally, ubiquitinated and degraded by the APC/C complex upon mitotic exit.

The protein resides in the nucleus. It is found in the chromosome. Functionally, involved in microhomology-mediated end-joining (MMEJ) DNA repair by promoting recruitment of polymerase theta (POLQ) to DNA damage sites during mitosis. MMEJ is an alternative non-homologous end-joining (NHEJ) machinery that takes place during mitosis to repair double-strand breaks in DNA that originate in S-phase. Accumulates in M-phase; following phosphorylation by PLK1, interacts with POLQ, enabling its recruitment to double-strand breaks for subsequent repair. Also involved in the DNA damage response (DDR) signaling in response to genotoxic stresses such as ionizing radiation (IR) during the S phase. Recruited to sites of DNA damage through interaction with the 9-1-1 cell-cycle checkpoint response complex and TOPBP1 in a ATR-dependent manner. Required for the progression of the G1 to S phase transition. Plays a role in the stimulation of CHEK1 phosphorylation. The chain is RAD9, HUS1, RAD1-interacting nuclear orphan protein 1 (RHNO1) from Bos taurus (Bovine).